Consider the following 393-residue polypeptide: Staphopain B (393 aa).

An N-terminal signal peptide occupies residues 1–36; it reads MNSSCKSRVFNIISIIMVSMLILSLGAFANNNKAKA. Positions 37–219 are excised as a propeptide; sequence DSHSKQLEIN…KVEENEAIQE (183 aa). Active-site residues include Cys-243, His-340, and Asn-360.

It belongs to the peptidase C47 family. As to quaternary structure, in the cytoplasm, prematurely activated/folded SspB forms a stable non-covalent complex with SspC. Proteolytically cleaved by staphylococcal serine protease (SspA).

The protein localises to the secreted. Its activity is regulated as follows. Prematurely activated/folded staphopain B is inhibited by staphostatin B (SspC), which is probably required to protect staphylococcal cytoplasmic proteins from degradation by SspB. Also inactivated by E-64 and stimulated by EDTA. Functionally, cysteine protease that plays an important role in the inhibition of host innate immune response. Degrades host elastin, fibrogen, fibronectin and kininogen. Blocks phagocytosis of opsonised S.aureus by neutrophils and monocytes by inducing their death in a proteolytic activity-dependent manner. Decreases surface expression of the 'don't eat me' signal CD31 on neutrophils. Cleaves host galectin-3/LGALS3, thereby inhibiting the neutrophil-activating ability of the lectin. The chain is Staphopain B (sspB) from Staphylococcus aureus (strain NCTC 8325 / PS 47).